We begin with the raw amino-acid sequence, 97 residues long: Large ribosomal subunit protein bL28 (97 aa).

It belongs to the bacterial ribosomal protein bL28 family.

This Bartonella quintana (strain Toulouse) (Rochalimaea quintana) protein is Large ribosomal subunit protein bL28.